A 212-amino-acid chain; its full sequence is Hevein-like preproprotein (212 aa).

The signal sequence occupies residues 1–21 (MKIRLSITIILLSYTVATVAG). The Chitin-binding type-1 domain occupies 22 to 64 (QQCGRQGGGRTCPGNICCSQYGYCGTTADYCSPTNNCQSNCWG). Disulfide bonds link C24–C39, C33–C45, C38–C52, C58–C62, C100–C132, C121–C155, and C135–C191. A Barwin domain is found at 72–193 (ESASNVRATY…VDYQFVDCGN (122 aa)).

CB-HEL interacts strongly with a fungal fruiting body lectin.

Its subcellular location is the vacuole. In terms of biological role, fungal growth inhibitors. Neither CB-HEL nor CD-HEL have chitinase activity, but both have antimicrobial activities. CD-HEL has RNase, but no DNase activity. This Arabidopsis thaliana (Mouse-ear cress) protein is Hevein-like preproprotein (HEL).